A 180-amino-acid polypeptide reads, in one-letter code: MTLKDIVVGFGTTVRSIWLIGMNAFAKRETLMYPEEPVYLPPRYRGRIVLTRDPDGQERCVACNLCAVACPVGCISLQKAETADGRWYPEFFRINFSRCIFCGLCEEACPTTAIQLTPDFELGEFKRQDLVYEKENLLISGPGKYPEYNFYRMAGMAIDGKDKGDAENEAKPIDVKGLLP.

2 4Fe-4S ferredoxin-type domains span residues 48–80 (IVLT…LQKA) and 90–119 (EFFR…LTPD). [4Fe-4S] cluster is bound by residues C60, C63, C66, C70, C99, C102, C105, and C109.

The protein belongs to the complex I 23 kDa subunit family. NDH-1 is composed of 13 different subunits. Subunits NuoA, H, J, K, L, M, N constitute the membrane sector of the complex. Requires [4Fe-4S] cluster as cofactor.

It is found in the cell inner membrane. The catalysed reaction is a quinone + NADH + 5 H(+)(in) = a quinol + NAD(+) + 4 H(+)(out). In terms of biological role, NDH-1 shuttles electrons from NADH, via FMN and iron-sulfur (Fe-S) centers, to quinones in the respiratory chain. The immediate electron acceptor for the enzyme in this species is believed to be ubiquinone. Couples the redox reaction to proton translocation (for every two electrons transferred, four hydrogen ions are translocated across the cytoplasmic membrane), and thus conserves the redox energy in a proton gradient. In Erwinia tasmaniensis (strain DSM 17950 / CFBP 7177 / CIP 109463 / NCPPB 4357 / Et1/99), this protein is NADH-quinone oxidoreductase subunit I.